The chain runs to 479 residues: Protein nucleotidyltransferase YdiU (479 aa).

Residues Gly83, Gly85, Arg86, Lys106, Asp118, Gly119, Arg169, and Arg176 each contribute to the ATP site. Residue Asp245 is the Proton acceptor of the active site. Positions 246 and 255 each coordinate Mg(2+). Asp255 contacts ATP.

The protein belongs to the SELO family. It depends on Mg(2+) as a cofactor. Mn(2+) serves as cofactor.

The catalysed reaction is L-seryl-[protein] + ATP = 3-O-(5'-adenylyl)-L-seryl-[protein] + diphosphate. The enzyme catalyses L-threonyl-[protein] + ATP = 3-O-(5'-adenylyl)-L-threonyl-[protein] + diphosphate. It catalyses the reaction L-tyrosyl-[protein] + ATP = O-(5'-adenylyl)-L-tyrosyl-[protein] + diphosphate. It carries out the reaction L-histidyl-[protein] + UTP = N(tele)-(5'-uridylyl)-L-histidyl-[protein] + diphosphate. The catalysed reaction is L-seryl-[protein] + UTP = O-(5'-uridylyl)-L-seryl-[protein] + diphosphate. The enzyme catalyses L-tyrosyl-[protein] + UTP = O-(5'-uridylyl)-L-tyrosyl-[protein] + diphosphate. In terms of biological role, nucleotidyltransferase involved in the post-translational modification of proteins. It can catalyze the addition of adenosine monophosphate (AMP) or uridine monophosphate (UMP) to a protein, resulting in modifications known as AMPylation and UMPylation. The protein is Protein nucleotidyltransferase YdiU of Erwinia tasmaniensis (strain DSM 17950 / CFBP 7177 / CIP 109463 / NCPPB 4357 / Et1/99).